The sequence spans 120 residues: NAD(P)H-quinone oxidoreductase subunit 3, chloroplastic (120 aa).

3 helical membrane passes run 10–30, 64–84, and 89–109; these read FWAF…TSSL, MFAL…PWAM, and LGVL…IGLV.

Belongs to the complex I subunit 3 family. As to quaternary structure, NDH is composed of at least 16 different subunits, 5 of which are encoded in the nucleus.

Its subcellular location is the plastid. The protein localises to the chloroplast thylakoid membrane. The catalysed reaction is a plastoquinone + NADH + (n+1) H(+)(in) = a plastoquinol + NAD(+) + n H(+)(out). It carries out the reaction a plastoquinone + NADPH + (n+1) H(+)(in) = a plastoquinol + NADP(+) + n H(+)(out). In terms of biological role, NDH shuttles electrons from NAD(P)H:plastoquinone, via FMN and iron-sulfur (Fe-S) centers, to quinones in the photosynthetic chain and possibly in a chloroplast respiratory chain. The immediate electron acceptor for the enzyme in this species is believed to be plastoquinone. Couples the redox reaction to proton translocation, and thus conserves the redox energy in a proton gradient. The polypeptide is NAD(P)H-quinone oxidoreductase subunit 3, chloroplastic (Zygnema circumcarinatum (Green alga)).